A 270-amino-acid polypeptide reads, in one-letter code: Glucosamine-6-phosphate deaminase (270 aa).

The active-site Proton acceptor; for enolization step is aspartate 72. Aspartate 141 serves as the catalytic For ring-opening step. Histidine 143 serves as the catalytic Proton acceptor; for ring-opening step. The active-site For ring-opening step is glutamate 148.

The protein belongs to the glucosamine/galactosamine-6-phosphate isomerase family. NagB subfamily.

The catalysed reaction is alpha-D-glucosamine 6-phosphate + H2O = beta-D-fructose 6-phosphate + NH4(+). It functions in the pathway amino-sugar metabolism; N-acetylneuraminate degradation; D-fructose 6-phosphate from N-acetylneuraminate: step 5/5. With respect to regulation, allosterically activated by N-acetylglucosamine 6-phosphate (GlcNAc6P). Its function is as follows. Catalyzes the reversible isomerization-deamination of glucosamine 6-phosphate (GlcN6P) to form fructose 6-phosphate (Fru6P) and ammonium ion. In Bacteroides fragilis (strain ATCC 25285 / DSM 2151 / CCUG 4856 / JCM 11019 / LMG 10263 / NCTC 9343 / Onslow / VPI 2553 / EN-2), this protein is Glucosamine-6-phosphate deaminase.